Here is a 425-residue protein sequence, read N- to C-terminus: Serine--tRNA ligase (425 aa).

230-232 (TAE) is a binding site for L-serine. ATP is bound at residue 261 to 263 (RSE). E284 lines the L-serine pocket. 348 to 351 (EISS) provides a ligand contact to ATP. S384 contacts L-serine.

Belongs to the class-II aminoacyl-tRNA synthetase family. Type-1 seryl-tRNA synthetase subfamily. In terms of assembly, homodimer. The tRNA molecule binds across the dimer.

The protein resides in the cytoplasm. The catalysed reaction is tRNA(Ser) + L-serine + ATP = L-seryl-tRNA(Ser) + AMP + diphosphate + H(+). The enzyme catalyses tRNA(Sec) + L-serine + ATP = L-seryl-tRNA(Sec) + AMP + diphosphate + H(+). It participates in aminoacyl-tRNA biosynthesis; selenocysteinyl-tRNA(Sec) biosynthesis; L-seryl-tRNA(Sec) from L-serine and tRNA(Sec): step 1/1. Functionally, catalyzes the attachment of serine to tRNA(Ser). Is also able to aminoacylate tRNA(Sec) with serine, to form the misacylated tRNA L-seryl-tRNA(Sec), which will be further converted into selenocysteinyl-tRNA(Sec). This Streptococcus pyogenes serotype M4 (strain MGAS10750) protein is Serine--tRNA ligase.